We begin with the raw amino-acid sequence, 499 residues long: Endoglucanase (499 aa).

The N-terminal stretch at 1 to 29 is a signal peptide; the sequence is MKRSISIFITCLLITLLTMGGMIASPASA. Substrate is bound by residues H65, 69 to 70, Y96, and H131; that span reads WY. Residue E169 is the Proton donor of the active site. Residue Y231 participates in substrate binding. E257 functions as the Nucleophile in the catalytic mechanism. Residues 263–264, W291, and 296–298 contribute to the substrate site; these read AS and KQE. Residues 350–499 form the CBM3 domain; the sequence is QENGISVQYR…GKLIWGTEPN (150 aa).

It belongs to the glycosyl hydrolase 5 (cellulase A) family.

The enzyme catalyses Endohydrolysis of (1-&gt;4)-beta-D-glucosidic linkages in cellulose, lichenin and cereal beta-D-glucans.. This is Endoglucanase (eglS) from Bacillus subtilis (strain 168).